The primary structure comprises 239 residues: LexA repressor (239 aa).

The tract at residues 1-40 is disordered; it reads MTEAATGPEGADPSRAARSLPGRPPGIRADSSGLTDRQRR. Residues 58–78 constitute a DNA-binding region (H-T-H motif); it reads MREIGQAVGLSSTSSVAHQLM. Basic and acidic residues predominate over residues 89–100; the sequence is DPHRPRAYEVRG. The segment at 89-116 is disordered; sequence DPHRPRAYEVRGSDQPSAQPADTSGKPA. Active-site for autocatalytic cleavage activity residues include serine 163 and lysine 200.

It belongs to the peptidase S24 family. As to quaternary structure, homodimer.

It carries out the reaction Hydrolysis of Ala-|-Gly bond in repressor LexA.. Its function is as follows. Represses a number of genes involved in the response to DNA damage (SOS response), including recA and lexA. In the presence of single-stranded DNA, RecA interacts with LexA causing an autocatalytic cleavage which disrupts the DNA-binding part of LexA, leading to derepression of the SOS regulon and eventually DNA repair. In Streptomyces clavuligerus, this protein is LexA repressor.